We begin with the raw amino-acid sequence, 612 residues long: Phosphopentomutase (612 aa).

An N-acetylalanine modification is found at Ala-2. Arg-63 and Ser-165 together coordinate alpha-D-glucose 1,6-bisphosphate. Ser-165 serves as the catalytic Phosphoserine intermediate. Ser-165, Asp-322, Asp-324, and Asp-326 together coordinate Mg(2+). Residue Ser-165 is modified to Phosphoserine. Alpha-D-glucose 1,6-bisphosphate-binding residues include Asp-326, Arg-327, Thr-400, Glu-424, and Lys-438.

It belongs to the phosphohexose mutase family. In terms of assembly, monomer. It depends on Mg(2+) as a cofactor.

Its subcellular location is the cytoplasm. The protein localises to the cytosol. The enzyme catalyses alpha-D-ribose 1-phosphate = D-ribose 5-phosphate. It catalyses the reaction 2-deoxy-alpha-D-ribose 1-phosphate = 2-deoxy-D-ribose 5-phosphate. The catalysed reaction is alpha-D-glucose 1-phosphate = alpha-D-glucose 6-phosphate. It carries out the reaction O-phospho-L-seryl-[protein] + alpha-D-glucose 1-phosphate = alpha-D-glucose 1,6-bisphosphate + L-seryl-[protein]. The enzyme catalyses alpha-D-glucose 1,6-bisphosphate + L-seryl-[protein] = O-phospho-L-seryl-[protein] + alpha-D-glucose 6-phosphate. In terms of biological role, catalyzes the conversion of the nucleoside breakdown products ribose-1-phosphate and deoxyribose-1-phosphate to the corresponding 5-phosphopentoses. Catalyzes the reversible isomerization of alpha-D-glucose 1-phosphate to alpha-D-glucose 6-phosphate but with a lower catalytic efficiency. The mechanism proceeds via the intermediate compound alpha-D-glucose 1,6-bisphosphate. In vitro, also has a low glucose 1,6-bisphosphate synthase activity which is most probably not physiologically relevant. This is Phosphopentomutase (PGM2) from Pongo abelii (Sumatran orangutan).